The primary structure comprises 87 residues: Phosphoribosyl-ATP pyrophosphatase (87 aa).

The protein belongs to the PRA-PH family.

It localises to the cytoplasm. The enzyme catalyses 1-(5-phospho-beta-D-ribosyl)-ATP + H2O = 1-(5-phospho-beta-D-ribosyl)-5'-AMP + diphosphate + H(+). The protein operates within amino-acid biosynthesis; L-histidine biosynthesis; L-histidine from 5-phospho-alpha-D-ribose 1-diphosphate: step 2/9. The polypeptide is Phosphoribosyl-ATP pyrophosphatase (Nocardia farcinica (strain IFM 10152)).